The sequence spans 448 residues: Homogentisate 1,2-dioxygenase (448 aa).

The Proton acceptor role is filled by histidine 303. Histidine 346 and glutamate 352 together coordinate Fe cation. Homogentisate is bound by residues tyrosine 361 and histidine 382. Histidine 382 is a binding site for Fe cation.

It belongs to the homogentisate dioxygenase family. Hexamer; dimer of trimers. The cofactor is Fe cation.

The catalysed reaction is homogentisate + O2 = 4-maleylacetoacetate + H(+). It functions in the pathway amino-acid degradation; L-phenylalanine degradation; acetoacetate and fumarate from L-phenylalanine: step 4/6. In terms of biological role, involved in the catabolism of homogentisate (2,5-dihydroxyphenylacetate or 2,5-OH-PhAc), a central intermediate in the degradation of phenylalanine and tyrosine. Catalyzes the oxidative ring cleavage of the aromatic ring of homogentisate to yield maleylacetoacetate. The chain is Homogentisate 1,2-dioxygenase from Rhodopseudomonas palustris (strain BisB18).